The sequence spans 95 residues: YcgL domain-containing protein Patl_2802 (95 aa).

The 85-residue stretch at 4-88 (LLCAVYKSSK…PEENLLKQHL (85 aa)) folds into the YcgL domain.

The sequence is that of YcgL domain-containing protein Patl_2802 from Pseudoalteromonas atlantica (strain T6c / ATCC BAA-1087).